The primary structure comprises 1342 residues: DNA-directed RNA polymerase subunit beta (1342 aa).

Lysine 1022 and lysine 1200 each carry N6-acetyllysine.

This sequence belongs to the RNA polymerase beta chain family. The RNAP catalytic core consists of 2 alpha, 1 beta, 1 beta' and 1 omega subunit. When a sigma factor is associated with the core the holoenzyme is formed, which can initiate transcription.

It catalyses the reaction RNA(n) + a ribonucleoside 5'-triphosphate = RNA(n+1) + diphosphate. Its function is as follows. DNA-dependent RNA polymerase catalyzes the transcription of DNA into RNA using the four ribonucleoside triphosphates as substrates. This chain is DNA-directed RNA polymerase subunit beta, found in Escherichia fergusonii (strain ATCC 35469 / DSM 13698 / CCUG 18766 / IAM 14443 / JCM 21226 / LMG 7866 / NBRC 102419 / NCTC 12128 / CDC 0568-73).